The sequence spans 95 residues: Large ribosomal subunit protein bL25 (95 aa).

This sequence belongs to the bacterial ribosomal protein bL25 family. As to quaternary structure, part of the 50S ribosomal subunit; part of the 5S rRNA/L5/L18/L25 subcomplex. Contacts the 5S rRNA. Binds to the 5S rRNA independently of L5 and L18.

This is one of the proteins that binds to the 5S RNA in the ribosome where it forms part of the central protuberance. The chain is Large ribosomal subunit protein bL25 from Shewanella halifaxensis (strain HAW-EB4).